A 151-amino-acid polypeptide reads, in one-letter code: Aspartate carbamoyltransferase regulatory chain (151 aa).

Zn(2+)-binding residues include Cys107, Cys112, Cys135, and Cys138.

Belongs to the PyrI family. In terms of assembly, contains catalytic and regulatory chains. The cofactor is Zn(2+).

Functionally, involved in allosteric regulation of aspartate carbamoyltransferase. The protein is Aspartate carbamoyltransferase regulatory chain of Thermococcus onnurineus (strain NA1).